The chain runs to 303 residues: Nucleotide-binding protein SAB0719 (303 aa).

18-25 (GLSGAGKS) is an ATP binding site. 69 to 72 (DLRG) contacts GTP.

This sequence belongs to the RapZ-like family.

Functionally, displays ATPase and GTPase activities. The chain is Nucleotide-binding protein SAB0719 from Staphylococcus aureus (strain bovine RF122 / ET3-1).